A 122-amino-acid chain; its full sequence is Large ribosomal subunit protein uL14c (122 aa).

It belongs to the universal ribosomal protein uL14 family. As to quaternary structure, part of the 50S ribosomal subunit.

It localises to the plastid. Its subcellular location is the chloroplast. Its function is as follows. Binds to 23S rRNA. The protein is Large ribosomal subunit protein uL14c of Pyropia yezoensis (Susabi-nori).